The sequence spans 141 residues: Hemoglobin subunit alpha-A (141 aa).

One can recognise a Globin domain in the interval 1–141; the sequence is VLSAADKNNV…VGTVLTAKYR (141 aa). His58 is an O2 binding site. His87 contributes to the heme b binding site.

It belongs to the globin family. Heterotetramer of two alpha chains and two beta chains. As to expression, red blood cells.

Its function is as follows. Involved in oxygen transport from the lung to the various peripheral tissues. The protein is Hemoglobin subunit alpha-A (HBAA) of Phasianus colchicus colchicus (Black-necked pheasant).